The primary structure comprises 155 residues: Small ribosomal subunit protein eS19 (155 aa).

This sequence belongs to the eukaryotic ribosomal protein eS19 family. As to quaternary structure, component of the small ribosomal subunit.

The protein localises to the cytoplasm. Functionally, component of the small ribosomal subunit. The ribosome is a large ribonucleoprotein complex responsible for the synthesis of proteins in the cell. Required for proper maturation of the small (40S) ribosomal subunit. The sequence is that of Small ribosomal subunit protein eS19 (RPS19) from Entamoeba histolytica (strain ATCC 30459 / HM-1:IMSS / ABRM).